The following is a 274-amino-acid chain: Formamidopyrimidine-DNA glycosylase (274 aa).

Proline 2 (schiff-base intermediate with DNA) is an active-site residue. The Proton donor role is filled by glutamate 3. Lysine 57 serves as the catalytic Proton donor; for beta-elimination activity. DNA contacts are provided by histidine 92, arginine 111, and lysine 152. An FPG-type zinc finger spans residues 237–271 (QVYGRKGEECRECGTLIQAKVIGQRNSYFCPDCQP). Residue arginine 261 is the Proton donor; for delta-elimination activity of the active site.

Belongs to the FPG family. In terms of assembly, monomer. Requires Zn(2+) as cofactor.

It carries out the reaction Hydrolysis of DNA containing ring-opened 7-methylguanine residues, releasing 2,6-diamino-4-hydroxy-5-(N-methyl)formamidopyrimidine.. The enzyme catalyses 2'-deoxyribonucleotide-(2'-deoxyribose 5'-phosphate)-2'-deoxyribonucleotide-DNA = a 3'-end 2'-deoxyribonucleotide-(2,3-dehydro-2,3-deoxyribose 5'-phosphate)-DNA + a 5'-end 5'-phospho-2'-deoxyribonucleoside-DNA + H(+). Functionally, involved in base excision repair of DNA damaged by oxidation or by mutagenic agents. Acts as a DNA glycosylase that recognizes and removes damaged bases. Has a preference for oxidized purines, such as 7,8-dihydro-8-oxoguanine (8-oxoG). Has AP (apurinic/apyrimidinic) lyase activity and introduces nicks in the DNA strand. Cleaves the DNA backbone by beta-delta elimination to generate a single-strand break at the site of the removed base with both 3'- and 5'-phosphates. The sequence is that of Formamidopyrimidine-DNA glycosylase from Haemophilus ducreyi (strain 35000HP / ATCC 700724).